The sequence spans 341 residues: 4-hydroxy-2-oxovalerate aldolase (341 aa).

In terms of domain architecture, Pyruvate carboxyltransferase spans Ile-5–Ala-257. Residue Arg-13–Asp-14 participates in substrate binding. Asp-14 lines the Mn(2+) pocket. His-17 (proton acceptor) is an active-site residue. Substrate-binding residues include Ser-167 and His-196. Mn(2+) is bound by residues His-196 and His-198. Tyr-287 contacts substrate.

The protein belongs to the 4-hydroxy-2-oxovalerate aldolase family.

It carries out the reaction (S)-4-hydroxy-2-oxopentanoate = acetaldehyde + pyruvate. This is 4-hydroxy-2-oxovalerate aldolase (mhpE) from Cupriavidus taiwanensis (strain DSM 17343 / BCRC 17206 / CCUG 44338 / CIP 107171 / LMG 19424 / R1) (Ralstonia taiwanensis (strain LMG 19424)).